The sequence spans 1305 residues: Rho GTPase-activating protein 33 (1305 aa).

The tract at residues 1 to 64 (MLQAQKQSDP…KPGKRLSAPR (64 aa)) is disordered. Position 32 is a phosphoserine (serine 32). The PX; atypical domain occupies 83–192 (FGHIQLLLSP…CGPVLTWMEL (110 aa)). Residues 210-272 (PAVAAAHVVK…PSECVELFTE (63 aa)) form the SH3 domain. The Rho-GAP domain occupies 339–534 (CDLGEHLSNS…FLLTHVEVLF (196 aa)). Disordered regions lie at residues 575–818 (RTQG…LDIS), 864–1054 (LSDT…SFFS), and 1115–1305 (SYSG…RSYC). The segment covering 582 to 595 (TPTEPTTPKTPASP) has biased composition (low complexity). Position 594 is a phosphoserine (serine 594). Residues 596 to 608 (VERRKRERAEKQR) show a composition bias toward basic and acidic residues. A compositionally biased stretch (polar residues) spans 646–669 (SGSRPDTVTLRSAKSEESLSSQAS). Serine 660 carries the post-translational modification Phosphoserine. The span at 694–733 (APAGSCESLSSSSSSSSSSSSSSSSESSAGGLGPLSGSPS) shows a compositional bias: low complexity. Serine 749 is subject to Phosphoserine. Positions 774 to 786 (PGDPAPPASPAPP) are enriched in pro residues. Positions 787–798 (ASASAFPPRATP) are enriched in low complexity. Over residues 864–873 (LSDTCQQEIS) the composition is skewed to polar residues. Residues 895–915 (LLPPPLPLLRPGGAPPPPPKN) are compositionally biased toward pro residues. Residues 916–940 (PARLMALALAERAQQVAEQQSQQEQ) show a composition bias toward low complexity. Polar residues-rich tracts occupy residues 992–1020 (RQQS…SQVS), 1039–1054 (SPCS…SFFS), and 1115–1125 (SYSGPSRSWSP). Tyrosine 1188 carries the post-translational modification Phosphotyrosine. The segment covering 1194 to 1208 (GPRGPSPASSSSSSP) has biased composition (low complexity). Arginine 1263 bears the Omega-N-methylarginine mark. Over residues 1292–1305 (SWSLHSEGQTRSYC) the composition is skewed to polar residues.

It belongs to the PX domain-containing GAP family. Specifically interacts with CDC42 and RHOQ/TC10 through its Rho-GAP domain. Interacts with NEK6. Highly expressed in brain and testis. Also expressed in white adipose tissue (WAT) and muscle at a low level.

The protein resides in the cell membrane. In terms of biological role, may be involved in several stages of intracellular trafficking. Could play an important role in the regulation of glucose transport by insulin. May act as a downstream effector of RHOQ/TC10 in the regulation of insulin-stimulated glucose transport. The protein is Rho GTPase-activating protein 33 (Arhgap33) of Mus musculus (Mouse).